Reading from the N-terminus, the 342-residue chain is MASATEKRRYEVLRAIVADYIESQEPVGSKALLERHKLNVSSATIRNDMSVLESDGYIVQEHASSGRVPTEKGYRLFVDSIHDIKPLSLAERRAILGFLEGGVDLEDVLRRSVQLLSQLTHQAAVVQLPTLKTARVKHCEVVSLSPVRLLLVLITDTGRVDQRNVELDEPLEADQVTVLKDLLNGALAEKTLTDASEALQELSRNAPSDIRSTMEKCSGVLVATLVEQPSDRLILAGASNLTRLTRETAASVPMVLEALEEQVVMLKLLSNVTDLDHVTVHIGEENEDLQLRSASVVTTGYGSAGNTLGGLGVVGPTYMDYPGTISKVSAVARYVGRVLAGE.

This sequence belongs to the HrcA family.

Functionally, negative regulator of class I heat shock genes (grpE-dnaK-dnaJ and groELS operons). Prevents heat-shock induction of these operons. The chain is Heat-inducible transcription repressor HrcA from Corynebacterium efficiens (strain DSM 44549 / YS-314 / AJ 12310 / JCM 11189 / NBRC 100395).